Reading from the N-terminus, the 266-residue chain is ATP synthase subunit a (266 aa).

The next 5 helical transmembrane spans lie at 28 to 48 (SINV…LVIF), 88 to 108 (LIAP…LMDL), 141 to 161 (DVNI…FYSI), 206 to 226 (LFGN…LLPW), and 237 to 257 (AIFH…LTVV).

It belongs to the ATPase A chain family. As to quaternary structure, F-type ATPases have 2 components, CF(1) - the catalytic core - and CF(0) - the membrane proton channel. CF(1) has five subunits: alpha(3), beta(3), gamma(1), delta(1), epsilon(1). CF(0) has three main subunits: a(1), b(2) and c(9-12). The alpha and beta chains form an alternating ring which encloses part of the gamma chain. CF(1) is attached to CF(0) by a central stalk formed by the gamma and epsilon chains, while a peripheral stalk is formed by the delta and b chains.

The protein localises to the cell inner membrane. Key component of the proton channel; it plays a direct role in the translocation of protons across the membrane. This Pectobacterium carotovorum subsp. carotovorum (strain PC1) protein is ATP synthase subunit a.